We begin with the raw amino-acid sequence, 230 residues long: Cytochrome c oxidase subunit 2 (230 aa).

At 1 to 14 the chain is on the mitochondrial intermembrane side; the sequence is MAHPSQLGFQDAAS. The helical transmembrane segment at 15 to 45 threads the bilayer; that stretch reads PVMEELIHFHDHTLMIVFLISTLVLYIITAM. The Mitochondrial matrix portion of the chain corresponds to 46–59; the sequence is VSTKLTNKYILDSQ. A helical membrane pass occupies residues 60-87; sequence EIEIVWTILPAIILIMIALPSLRILYLM. Residues 88 to 230 are Mitochondrial intermembrane-facing; sequence DEINDPHLTI…TWSSLMLEEA (143 aa). Cu cation contacts are provided by His-161, Cys-196, Glu-198, Cys-200, His-204, and Met-207. A Mg(2+)-binding site is contributed by Glu-198.

The protein belongs to the cytochrome c oxidase subunit 2 family. In terms of assembly, component of the cytochrome c oxidase (complex IV, CIV), a multisubunit enzyme composed of 14 subunits. The complex is composed of a catalytic core of 3 subunits MT-CO1, MT-CO2 and MT-CO3, encoded in the mitochondrial DNA, and 11 supernumerary subunits COX4I, COX5A, COX5B, COX6A, COX6B, COX6C, COX7A, COX7B, COX7C, COX8 and NDUFA4, which are encoded in the nuclear genome. The complex exists as a monomer or a dimer and forms supercomplexes (SCs) in the inner mitochondrial membrane with NADH-ubiquinone oxidoreductase (complex I, CI) and ubiquinol-cytochrome c oxidoreductase (cytochrome b-c1 complex, complex III, CIII), resulting in different assemblies (supercomplex SCI(1)III(2)IV(1) and megacomplex MCI(2)III(2)IV(2)). Found in a complex with TMEM177, COA6, COX18, COX20, SCO1 and SCO2. Interacts with TMEM177 in a COX20-dependent manner. Interacts with COX20. Interacts with COX16. The cofactor is Cu cation.

The protein localises to the mitochondrion inner membrane. It catalyses the reaction 4 Fe(II)-[cytochrome c] + O2 + 8 H(+)(in) = 4 Fe(III)-[cytochrome c] + 2 H2O + 4 H(+)(out). Functionally, component of the cytochrome c oxidase, the last enzyme in the mitochondrial electron transport chain which drives oxidative phosphorylation. The respiratory chain contains 3 multisubunit complexes succinate dehydrogenase (complex II, CII), ubiquinol-cytochrome c oxidoreductase (cytochrome b-c1 complex, complex III, CIII) and cytochrome c oxidase (complex IV, CIV), that cooperate to transfer electrons derived from NADH and succinate to molecular oxygen, creating an electrochemical gradient over the inner membrane that drives transmembrane transport and the ATP synthase. Cytochrome c oxidase is the component of the respiratory chain that catalyzes the reduction of oxygen to water. Electrons originating from reduced cytochrome c in the intermembrane space (IMS) are transferred via the dinuclear copper A center (CU(A)) of subunit 2 and heme A of subunit 1 to the active site in subunit 1, a binuclear center (BNC) formed by heme A3 and copper B (CU(B)). The BNC reduces molecular oxygen to 2 water molecules using 4 electrons from cytochrome c in the IMS and 4 protons from the mitochondrial matrix. The protein is Cytochrome c oxidase subunit 2 (MT-CO2) of Scyliorhinus canicula (Small-spotted catshark).